Reading from the N-terminus, the 146-residue chain is 3-hydroxyacyl-[acyl-carrier-protein] dehydratase FabZ (146 aa).

Residue histidine 49 is part of the active site.

The protein belongs to the thioester dehydratase family. FabZ subfamily.

Its subcellular location is the cytoplasm. The enzyme catalyses a (3R)-hydroxyacyl-[ACP] = a (2E)-enoyl-[ACP] + H2O. Involved in unsaturated fatty acids biosynthesis. Catalyzes the dehydration of short chain beta-hydroxyacyl-ACPs and long chain saturated and unsaturated beta-hydroxyacyl-ACPs. This is 3-hydroxyacyl-[acyl-carrier-protein] dehydratase FabZ from Azotobacter vinelandii (strain DJ / ATCC BAA-1303).